Here is a 275-residue protein sequence, read N- to C-terminus: 4-hydroxy-3-methylbut-2-enyl diphosphate reductase (275 aa).

Cys12 provides a ligand contact to [4Fe-4S] cluster. Positions 36 and 70 each coordinate (2E)-4-hydroxy-3-methylbut-2-enyl diphosphate. Residues His36 and His70 each contribute to the dimethylallyl diphosphate site. Isopentenyl diphosphate is bound by residues His36 and His70. Cys92 is a binding site for [4Fe-4S] cluster. His120 lines the (2E)-4-hydroxy-3-methylbut-2-enyl diphosphate pocket. His120 contacts dimethylallyl diphosphate. Residue His120 participates in isopentenyl diphosphate binding. Glu122 serves as the catalytic Proton donor. Thr158 is a (2E)-4-hydroxy-3-methylbut-2-enyl diphosphate binding site. Cys186 lines the [4Fe-4S] cluster pocket. Residues Ser214, Ser215, Asn216, and Ser258 each coordinate (2E)-4-hydroxy-3-methylbut-2-enyl diphosphate. The dimethylallyl diphosphate site is built by Ser214, Ser215, Asn216, and Ser258. Isopentenyl diphosphate-binding residues include Ser214, Ser215, Asn216, and Ser258.

Belongs to the IspH family. [4Fe-4S] cluster is required as a cofactor.

The enzyme catalyses isopentenyl diphosphate + 2 oxidized [2Fe-2S]-[ferredoxin] + H2O = (2E)-4-hydroxy-3-methylbut-2-enyl diphosphate + 2 reduced [2Fe-2S]-[ferredoxin] + 2 H(+). The catalysed reaction is dimethylallyl diphosphate + 2 oxidized [2Fe-2S]-[ferredoxin] + H2O = (2E)-4-hydroxy-3-methylbut-2-enyl diphosphate + 2 reduced [2Fe-2S]-[ferredoxin] + 2 H(+). Its pathway is isoprenoid biosynthesis; dimethylallyl diphosphate biosynthesis; dimethylallyl diphosphate from (2E)-4-hydroxy-3-methylbutenyl diphosphate: step 1/1. It participates in isoprenoid biosynthesis; isopentenyl diphosphate biosynthesis via DXP pathway; isopentenyl diphosphate from 1-deoxy-D-xylulose 5-phosphate: step 6/6. In terms of biological role, catalyzes the conversion of 1-hydroxy-2-methyl-2-(E)-butenyl 4-diphosphate (HMBPP) into a mixture of isopentenyl diphosphate (IPP) and dimethylallyl diphosphate (DMAPP). Acts in the terminal step of the DOXP/MEP pathway for isoprenoid precursor biosynthesis. The protein is 4-hydroxy-3-methylbut-2-enyl diphosphate reductase of Sulfurimonas denitrificans (strain ATCC 33889 / DSM 1251) (Thiomicrospira denitrificans (strain ATCC 33889 / DSM 1251)).